The chain runs to 377 residues: Palmitoyltransferase ZDHHC16 (377 aa).

Residues 1 to 77 (MRGQRSLLLG…VYWLVDNVIR (77 aa)) lie on the Cytoplasmic side of the membrane. A helical membrane pass occupies residues 78–98 (WFGVVFVVLVIVLTGSIVAIA). Over 99-116 (YLCVLPLILRTYSVPRLC) the chain is Lumenal. Residues 117 to 137 (WHFFYSHWNLILIVFHYYQAI) form a helical membrane-spanning segment. At 138 to 198 (TTPPGYPPQG…NNCVGHYNHR (61 aa)) the chain is on the cytoplasmic side. The 51-residue stretch at 155 to 205 (SICKKCIYPKPARTHHCSICNRCVLKMDHHCPWLNNCVGHYNHRYFFSFCF) folds into the DHHC domain. The S-palmitoyl cysteine intermediate role is filled by Cys185. A helical membrane pass occupies residues 199 to 219 (YFFSFCFFMTLGCVYCSYGSW). Over 220-266 (DLFREAYAAIEKMKQLDKNKLQAVANQTYHQTPPPTFSFRERMTHKS) the chain is Lumenal. The chain crosses the membrane as a helical span at residues 267 to 287 (LVYLWFLCSSVALALGALTVW). Over 288 to 377 (HAVLISRGET…TAHSASVMAV (90 aa)) the chain is Cytoplasmic.

The protein belongs to the DHHC palmitoyltransferase family. In terms of assembly, interacts with ABL1. Interacts with COPS5/JAB1. In terms of tissue distribution, widely expressed.

It is found in the endoplasmic reticulum membrane. The enzyme catalyses L-cysteinyl-[protein] + hexadecanoyl-CoA = S-hexadecanoyl-L-cysteinyl-[protein] + CoA. Functionally, palmitoyl acyltransferase that mediates palmitoylation of proteins such as PLN and ZDHHC6. Required during embryonic heart development and cardiac function, possibly by mediating palmitoylation of PLN, thereby affecting PLN phosphorylation and homooligomerization. Also required for eye development. Palmitoylates ZDHHC6, affecting the quaternary assembly of ZDHHC6, its localization, stability and function. May play a role in DNA damage response. May be involved in apoptosis regulation. Involved in the proliferation of neural stem cells by regulating the FGF/ERK pathway. In Homo sapiens (Human), this protein is Palmitoyltransferase ZDHHC16.